The sequence spans 486 residues: MTTFYTVVSWLVILGYWVLIAGVTLRILMKRRAVPSAMAWLLIIYILPLVGIIAYLSVGELHLGKRRAERARAMWPSTAKWLNDLKACKHIFAQENSSVASSLFKLCERRQGIAGVKGNQLQLLTDSDDVMQALIRDIQLARHNIEMVFYIWQPGGMADQVAESLMAAARRDIHCRLMLDSAGSVAFFRSPWAAMMRNAGIEVVEALKVNLMRVFLRRMDLRQHRKMVMIDNYIAYTGSMNMVDPRFFKQDAGVGQWVDLMARMEGPVATAMGIVYSCDWEIETGKRILPPPPDVNIMPFEQASGHTIHTIASGPGFPEDLIHQALLTATYAAREYLIMTTPYFVPSDDLLHAICTAAQRGVDVSIILPRKNDSLLVGWASRAFFSELLAAGVKIYQFEGGLLHTKSVLVDGELSLVGTVNLDMRSLWLNFEITLVIDDTGFGADLAAVQDDYISRSRLLDARLWVKRPLWQRITERLFYFFSPLL.

2 consecutive transmembrane segments (helical) span residues 3-23 (TFYTVVSWLVILGYWVLIAGV) and 38-58 (MAWLLIIYILPLVGIIAYLSV). PLD phosphodiesterase domains follow at residues 219–246 (MDLRQHRKMVMIDNYIAYTGSMNMVDPR) and 399–426 (EGGLLHTKSVLVDGELSLVGTVNLDMRS). Catalysis depends on residues H224, K226, D231, H404, K406, and D411.

It belongs to the phospholipase D family. Cardiolipin synthase subfamily. ClsA sub-subfamily.

It localises to the cell inner membrane. It carries out the reaction 2 a 1,2-diacyl-sn-glycero-3-phospho-(1'-sn-glycerol) = a cardiolipin + glycerol. Its function is as follows. Catalyzes the reversible phosphatidyl group transfer from one phosphatidylglycerol molecule to another to form cardiolipin (CL) (diphosphatidylglycerol) and glycerol. In Salmonella paratyphi A (strain ATCC 9150 / SARB42), this protein is Cardiolipin synthase A.